A 154-amino-acid chain; its full sequence is MGLSDGEWQLVLNVWGKVEGDLSGHGQEVLIRLFKGHPETLEKFDKFKHLKAEDEMRASEELKKHGTTVLTALGGILKKKGQHAAELAPLAQSHATKHKIPVKYLEFISEAIIQVLQSKHPGDFGADAQGAMSKALELFRNDIAAKYKELGFQG.

Positions 2–148 constitute a Globin domain; sequence GLSDGEWQLV…FRNDIAAKYK (147 aa). S4 is modified (phosphoserine). H65 provides a ligand contact to nitrite. Position 65 (H65) interacts with O2. T68 carries the post-translational modification Phosphothreonine. A heme b-binding site is contributed by H94.

This sequence belongs to the globin family. Monomeric.

Its subcellular location is the cytoplasm. It is found in the sarcoplasm. It carries out the reaction Fe(III)-heme b-[protein] + nitric oxide + H2O = Fe(II)-heme b-[protein] + nitrite + 2 H(+). The enzyme catalyses H2O2 + AH2 = A + 2 H2O. Its function is as follows. Monomeric heme protein which primary function is to store oxygen and facilitate its diffusion within muscle tissues. Reversibly binds oxygen through a pentacoordinated heme iron and enables its timely and efficient release as needed during periods of heightened demand. Depending on the oxidative conditions of tissues and cells, and in addition to its ability to bind oxygen, it also has a nitrite reductase activity whereby it regulates the production of bioactive nitric oxide. Under stress conditions, like hypoxia and anoxia, it also protects cells against reactive oxygen species thanks to its pseudoperoxidase activity. The chain is Myoglobin (MB) from Proechimys guairae (Guaira spiny rat).